We begin with the raw amino-acid sequence, 420 residues long: E3 ubiquitin-protein ligase pellino homolog 2 (420 aa).

One can recognise an FHA; atypical domain in the interval 15-202 (EPVKYGELVV…MHPRGGFTEE (188 aa)).

The protein belongs to the pellino family. As to quaternary structure, interacts with TRAF6, IRAK1, IRAK4 and MAP3K7. Interacts with BCL10; this interaction is impaired by SOCS3. In terms of processing, phosphorylated by IRAK1 and IRAK4 enhancing its E3 ligase activity.

The enzyme catalyses S-ubiquitinyl-[E2 ubiquitin-conjugating enzyme]-L-cysteine + [acceptor protein]-L-lysine = [E2 ubiquitin-conjugating enzyme]-L-cysteine + N(6)-ubiquitinyl-[acceptor protein]-L-lysine.. Its pathway is protein modification; protein ubiquitination. In terms of biological role, E3 ubiquitin ligase catalyzing the covalent attachment of ubiquitin moieties onto substrate proteins. Involved in the TLR and IL-1 signaling pathways via interaction with the complex containing IRAK kinases and TRAF6. Mediates IL1B-induced IRAK1 'Lys-63'-linked polyubiquitination and possibly 'Lys-48'-linked ubiquitination. May be important for LPS- and IL1B-induced MAP3K7-dependent, but not MAP3K3-dependent, NF-kappa-B activation. Can activate the MAP (mitogen activated protein) kinase pathway leading to activation of ELK1. This chain is E3 ubiquitin-protein ligase pellino homolog 2 (PELI2), found in Homo sapiens (Human).